A 582-amino-acid polypeptide reads, in one-letter code: Kelch-like protein diablo (582 aa).

Residues 1–22 (MGDVLISDRPPSPARLSHTSEK) are disordered. A BTB domain is found at 41–108 (CDVVINVSGR…CYTSHIVVEE (68 aa)). Residues 143 to 245 (CLGIRAFADT…SPKFLVGTVG (103 aa)) enclose the BACK domain. Kelch repeat units lie at residues 292–338 (VLFA…VLND), 340–386 (LYAV…VLDG), 387–433 (FLYA…VLGG), 435–480 (LYAI…VFNN), 482–527 (IYAV…VVNG), and 528–574 (QLYA…VMRA).

It functions in the pathway protein modification; protein ubiquitination. Its function is as follows. Probable substrate-specific adapter of an E3 ubiquitin-protein ligase complex which mediates the ubiquitination and subsequent proteasomal degradation of target proteins. May have a role in synapse differentiation and growth. The polypeptide is Kelch-like protein diablo (Culex quinquefasciatus (Southern house mosquito)).